A 637-amino-acid polypeptide reads, in one-letter code: Chaperone protein HtpG (637 aa).

The segment at 1–328 is a; substrate-binding; it reads MADIEELKFD…SSDLPLNISR (328 aa). The interval 329 to 556 is b; the sequence is ETLQNNRIVE…DNSMDIRMER (228 aa). The interval 488 to 508 is disordered; the sequence is IGASDDSGDKTSEDSGESASD. Residues 494-508 show a composition bias toward basic and acidic residues; the sequence is SGDKTSEDSGESASD. The interval 557-637 is c; sequence FLREQKQLNY…GVLAKIFSSK (81 aa).

Belongs to the heat shock protein 90 family. In terms of assembly, homodimer.

It is found in the cytoplasm. Functionally, molecular chaperone. Has ATPase activity. This Anaplasma phagocytophilum (strain HZ) protein is Chaperone protein HtpG.